The sequence spans 172 residues: 3-hydroxydecanoyl-[acyl-carrier-protein] dehydratase (172 aa).

Residue histidine 71 is part of the active site.

The protein belongs to the thioester dehydratase family. FabA subfamily. As to quaternary structure, homodimer.

The protein resides in the cytoplasm. It carries out the reaction a (3R)-hydroxyacyl-[ACP] = a (2E)-enoyl-[ACP] + H2O. The enzyme catalyses (3R)-hydroxydecanoyl-[ACP] = (2E)-decenoyl-[ACP] + H2O. The catalysed reaction is (2E)-decenoyl-[ACP] = (3Z)-decenoyl-[ACP]. It functions in the pathway lipid metabolism; fatty acid biosynthesis. In terms of biological role, necessary for the introduction of cis unsaturation into fatty acids. Catalyzes the dehydration of (3R)-3-hydroxydecanoyl-ACP to E-(2)-decenoyl-ACP and then its isomerization to Z-(3)-decenoyl-ACP. Can catalyze the dehydratase reaction for beta-hydroxyacyl-ACPs with saturated chain lengths up to 16:0, being most active on intermediate chain length. The protein is 3-hydroxydecanoyl-[acyl-carrier-protein] dehydratase of Escherichia coli (strain SE11).